We begin with the raw amino-acid sequence, 363 residues long: UDP-N-acetylglucosamine--N-acetylmuramyl-(pentapeptide) pyrophosphoryl-undecaprenol N-acetylglucosamine transferase (363 aa).

UDP-N-acetyl-alpha-D-glucosamine contacts are provided by residues Thr-10 to Gly-12, Asn-124, Ser-195, Ile-249, and Gln-294.

It belongs to the glycosyltransferase 28 family. MurG subfamily.

It is found in the cell membrane. It catalyses the reaction Mur2Ac(oyl-L-Ala-gamma-D-Glu-L-Lys-D-Ala-D-Ala)-di-trans,octa-cis-undecaprenyl diphosphate + UDP-N-acetyl-alpha-D-glucosamine = beta-D-GlcNAc-(1-&gt;4)-Mur2Ac(oyl-L-Ala-gamma-D-Glu-L-Lys-D-Ala-D-Ala)-di-trans,octa-cis-undecaprenyl diphosphate + UDP + H(+). It functions in the pathway cell wall biogenesis; peptidoglycan biosynthesis. Functionally, cell wall formation. Catalyzes the transfer of a GlcNAc subunit on undecaprenyl-pyrophosphoryl-MurNAc-pentapeptide (lipid intermediate I) to form undecaprenyl-pyrophosphoryl-MurNAc-(pentapeptide)GlcNAc (lipid intermediate II). The chain is UDP-N-acetylglucosamine--N-acetylmuramyl-(pentapeptide) pyrophosphoryl-undecaprenol N-acetylglucosamine transferase from Leuconostoc mesenteroides subsp. mesenteroides (strain ATCC 8293 / DSM 20343 / BCRC 11652 / CCM 1803 / JCM 6124 / NCDO 523 / NBRC 100496 / NCIMB 8023 / NCTC 12954 / NRRL B-1118 / 37Y).